We begin with the raw amino-acid sequence, 152 residues long: Regulatory protein RecX (152 aa).

Belongs to the RecX family.

It localises to the cytoplasm. Modulates RecA activity. This is Regulatory protein RecX from Chromohalobacter salexigens (strain ATCC BAA-138 / DSM 3043 / CIP 106854 / NCIMB 13768 / 1H11).